Consider the following 273-residue polypeptide: Putative pyruvate, phosphate dikinase regulatory protein (273 aa).

149 to 156 (GPSRTSKT) is a binding site for ADP.

The protein belongs to the pyruvate, phosphate/water dikinase regulatory protein family. PDRP subfamily.

It carries out the reaction N(tele)-phospho-L-histidyl/L-threonyl-[pyruvate, phosphate dikinase] + ADP = N(tele)-phospho-L-histidyl/O-phospho-L-threonyl-[pyruvate, phosphate dikinase] + AMP + H(+). It catalyses the reaction N(tele)-phospho-L-histidyl/O-phospho-L-threonyl-[pyruvate, phosphate dikinase] + phosphate + H(+) = N(tele)-phospho-L-histidyl/L-threonyl-[pyruvate, phosphate dikinase] + diphosphate. Functionally, bifunctional serine/threonine kinase and phosphorylase involved in the regulation of the pyruvate, phosphate dikinase (PPDK) by catalyzing its phosphorylation/dephosphorylation. This chain is Putative pyruvate, phosphate dikinase regulatory protein, found in Rickettsia rickettsii (strain Iowa).